The primary structure comprises 168 residues: Ribosome-binding factor A (168 aa).

The span at 125 to 138 (RVREGAKHAGDSDP) shows a compositional bias: basic and acidic residues. A disordered region spans residues 125–168 (RVREGAKHAGDSDPYRVLGEGDLEGPATGGPDVEDEGGANSHDR).

The protein belongs to the RbfA family. Monomer. Binds 30S ribosomal subunits, but not 50S ribosomal subunits or 70S ribosomes.

It localises to the cytoplasm. One of several proteins that assist in the late maturation steps of the functional core of the 30S ribosomal subunit. Associates with free 30S ribosomal subunits (but not with 30S subunits that are part of 70S ribosomes or polysomes). Required for efficient processing of 16S rRNA. May interact with the 5'-terminal helix region of 16S rRNA. This chain is Ribosome-binding factor A, found in Mycolicibacterium gilvum (strain PYR-GCK) (Mycobacterium gilvum (strain PYR-GCK)).